The following is a 316-amino-acid chain: 4-hydroxy-3-methylbut-2-enyl diphosphate reductase (316 aa).

A [4Fe-4S] cluster-binding site is contributed by Cys-12. His-41 and His-74 together coordinate (2E)-4-hydroxy-3-methylbut-2-enyl diphosphate. His-41 and His-74 together coordinate dimethylallyl diphosphate. Residues His-41 and His-74 each contribute to the isopentenyl diphosphate site. Cys-96 is a [4Fe-4S] cluster binding site. His-124 serves as a coordination point for (2E)-4-hydroxy-3-methylbut-2-enyl diphosphate. Position 124 (His-124) interacts with dimethylallyl diphosphate. Position 124 (His-124) interacts with isopentenyl diphosphate. Catalysis depends on Glu-126, which acts as the Proton donor. Residue Thr-169 participates in (2E)-4-hydroxy-3-methylbut-2-enyl diphosphate binding. Cys-199 contacts [4Fe-4S] cluster. (2E)-4-hydroxy-3-methylbut-2-enyl diphosphate contacts are provided by Ser-227, Ser-228, Asn-229, and Ser-271. 4 residues coordinate dimethylallyl diphosphate: Ser-227, Ser-228, Asn-229, and Ser-271. The isopentenyl diphosphate site is built by Ser-227, Ser-228, Asn-229, and Ser-271.

This sequence belongs to the IspH family. [4Fe-4S] cluster serves as cofactor.

The enzyme catalyses isopentenyl diphosphate + 2 oxidized [2Fe-2S]-[ferredoxin] + H2O = (2E)-4-hydroxy-3-methylbut-2-enyl diphosphate + 2 reduced [2Fe-2S]-[ferredoxin] + 2 H(+). It catalyses the reaction dimethylallyl diphosphate + 2 oxidized [2Fe-2S]-[ferredoxin] + H2O = (2E)-4-hydroxy-3-methylbut-2-enyl diphosphate + 2 reduced [2Fe-2S]-[ferredoxin] + 2 H(+). Its pathway is isoprenoid biosynthesis; dimethylallyl diphosphate biosynthesis; dimethylallyl diphosphate from (2E)-4-hydroxy-3-methylbutenyl diphosphate: step 1/1. It functions in the pathway isoprenoid biosynthesis; isopentenyl diphosphate biosynthesis via DXP pathway; isopentenyl diphosphate from 1-deoxy-D-xylulose 5-phosphate: step 6/6. Catalyzes the conversion of 1-hydroxy-2-methyl-2-(E)-butenyl 4-diphosphate (HMBPP) into a mixture of isopentenyl diphosphate (IPP) and dimethylallyl diphosphate (DMAPP). Acts in the terminal step of the DOXP/MEP pathway for isoprenoid precursor biosynthesis. The protein is 4-hydroxy-3-methylbut-2-enyl diphosphate reductase of Xanthomonas axonopodis pv. citri (strain 306).